Consider the following 354-residue polypeptide: DNA polymerase IV (354 aa).

Positions 7-188 constitute a UmuC domain; that stretch reads IIHVDMDCFF…LPLAKIPGVG (182 aa). Mg(2+)-binding residues include aspartate 11 and aspartate 106. Residue glutamate 107 is part of the active site.

It belongs to the DNA polymerase type-Y family. As to quaternary structure, monomer. It depends on Mg(2+) as a cofactor.

The protein localises to the cytoplasm. The catalysed reaction is DNA(n) + a 2'-deoxyribonucleoside 5'-triphosphate = DNA(n+1) + diphosphate. Functionally, poorly processive, error-prone DNA polymerase involved in untargeted mutagenesis. Copies undamaged DNA at stalled replication forks, which arise in vivo from mismatched or misaligned primer ends. These misaligned primers can be extended by PolIV. Exhibits no 3'-5' exonuclease (proofreading) activity. May be involved in translesional synthesis, in conjunction with the beta clamp from PolIII. This is DNA polymerase IV from Shigella boydii serotype 18 (strain CDC 3083-94 / BS512).